The chain runs to 345 residues: Holliday junction branch migration complex subunit RuvB (345 aa).

The segment at 1–182 is large ATPase domain (RuvB-L); that stretch reads MDQRIIASSS…FGIVQRLEFY (182 aa). Residues Ile-21, Arg-22, Gly-63, Lys-66, Thr-67, Thr-68, 129–131, Arg-172, Tyr-182, and Arg-219 contribute to the ATP site; that span reads EDF. Thr-67 is a Mg(2+) binding site. The small ATPAse domain (RuvB-S) stretch occupies residues 183 to 253; that stretch reads SPQELTRIVI…VAQAAMQMLK (71 aa). The interval 256 to 345 is head domain (RuvB-H); sequence PEGFDELDRR…PGIGEPGDLF (90 aa). DNA-binding residues include Arg-292, Arg-311, and Arg-316.

It belongs to the RuvB family. In terms of assembly, homohexamer. Forms an RuvA(8)-RuvB(12)-Holliday junction (HJ) complex. HJ DNA is sandwiched between 2 RuvA tetramers; dsDNA enters through RuvA and exits via RuvB. An RuvB hexamer assembles on each DNA strand where it exits the tetramer. Each RuvB hexamer is contacted by two RuvA subunits (via domain III) on 2 adjacent RuvB subunits; this complex drives branch migration. In the full resolvosome a probable DNA-RuvA(4)-RuvB(12)-RuvC(2) complex forms which resolves the HJ.

It localises to the cytoplasm. The catalysed reaction is ATP + H2O = ADP + phosphate + H(+). Its function is as follows. The RuvA-RuvB-RuvC complex processes Holliday junction (HJ) DNA during genetic recombination and DNA repair, while the RuvA-RuvB complex plays an important role in the rescue of blocked DNA replication forks via replication fork reversal (RFR). RuvA specifically binds to HJ cruciform DNA, conferring on it an open structure. The RuvB hexamer acts as an ATP-dependent pump, pulling dsDNA into and through the RuvAB complex. RuvB forms 2 homohexamers on either side of HJ DNA bound by 1 or 2 RuvA tetramers; 4 subunits per hexamer contact DNA at a time. Coordinated motions by a converter formed by DNA-disengaged RuvB subunits stimulates ATP hydrolysis and nucleotide exchange. Immobilization of the converter enables RuvB to convert the ATP-contained energy into a lever motion, pulling 2 nucleotides of DNA out of the RuvA tetramer per ATP hydrolyzed, thus driving DNA branch migration. The RuvB motors rotate together with the DNA substrate, which together with the progressing nucleotide cycle form the mechanistic basis for DNA recombination by continuous HJ branch migration. Branch migration allows RuvC to scan DNA until it finds its consensus sequence, where it cleaves and resolves cruciform DNA. The protein is Holliday junction branch migration complex subunit RuvB of Xanthomonas oryzae pv. oryzae (strain MAFF 311018).